Reading from the N-terminus, the 227-residue chain is MNTIISPKEIALYIDHTLLKPEASPAAIRTLCAEAREYSFKTVCVNSCYVPLCVEELQACPVDVCSVVGFPLGAMLSSAKAYEAKLAVAAGADEIDMVINIGLLKAGELEAVRADIETVFAACGEADLKVIIETGLLSDAEKKSVCQICKEVGVAFVKTSTGFGHGGATVADVELMRAVVGERCKVKASGGVRNLADARALIAAGANRIGASAGIAIVNGEEVPPSR.

D96 (proton donor/acceptor) is an active-site residue. Catalysis depends on K158, which acts as the Schiff-base intermediate with acetaldehyde. K187 acts as the Proton donor/acceptor in catalysis.

Belongs to the DeoC/FbaB aldolase family. DeoC type 1 subfamily.

The protein resides in the cytoplasm. The catalysed reaction is 2-deoxy-D-ribose 5-phosphate = D-glyceraldehyde 3-phosphate + acetaldehyde. Its pathway is carbohydrate degradation; 2-deoxy-D-ribose 1-phosphate degradation; D-glyceraldehyde 3-phosphate and acetaldehyde from 2-deoxy-alpha-D-ribose 1-phosphate: step 2/2. Its function is as follows. Catalyzes a reversible aldol reaction between acetaldehyde and D-glyceraldehyde 3-phosphate to generate 2-deoxy-D-ribose 5-phosphate. The sequence is that of Deoxyribose-phosphate aldolase from Desulfotalea psychrophila (strain LSv54 / DSM 12343).